We begin with the raw amino-acid sequence, 154 residues long: Low molecular weight protein-tyrosine-phosphatase PtpA (154 aa).

The active-site Nucleophile is the cysteine 8. The active site involves arginine 14. The active-site Proton donor is the aspartate 120.

Belongs to the low molecular weight phosphotyrosine protein phosphatase family.

The enzyme catalyses O-phospho-L-tyrosyl-[protein] + H2O = L-tyrosyl-[protein] + phosphate. In terms of biological role, dephosphorylates the phosphotyrosine-containing proteins. In Staphylococcus haemolyticus (strain JCSC1435), this protein is Low molecular weight protein-tyrosine-phosphatase PtpA (ptpA).